Here is a 596-residue protein sequence, read N- to C-terminus: Pescadillo homolog (596 aa).

Positions 347-440 (PTSTLFSEFV…ELVPANLYLP (94 aa)) constitute a BRCT domain. The disordered stretch occupies residues 449-552 (SPWGDSVGYD…EEKDLKLIMM (104 aa)). Residues 460 to 596 (AAELAEEEAE…TKAKLKKLEN (137 aa)) adopt a coiled-coil conformation. The span at 463 to 500 (LAEEEAESEEEEEVSDEAEGDEEATLAAEEDEEDEAEA) shows a compositional bias: acidic residues. Residues 501–510 (EELRAQKELE) are compositionally biased toward basic and acidic residues. The span at 519–529 (SEAADSAAPSK) shows a compositional bias: low complexity.

Belongs to the pescadillo family. In terms of assembly, component of the NOP7 complex, composed of ERB1, NOP7 and YTM1. The complex is held together by ERB1, which interacts with NOP7 via its N-terminal domain and with YTM1 via a high-affinity interaction between the seven-bladed beta-propeller domains of the 2 proteins. The NOP7 complex associates with the 66S pre-ribosome.

It localises to the nucleus. It is found in the nucleolus. Its subcellular location is the nucleoplasm. Its function is as follows. Component of the NOP7 complex, which is required for maturation of the 25S and 5.8S ribosomal RNAs and formation of the 60S ribosome. This chain is Pescadillo homolog, found in Eremothecium gossypii (strain ATCC 10895 / CBS 109.51 / FGSC 9923 / NRRL Y-1056) (Yeast).